The following is a 423-amino-acid chain: Diels-Alderase cheD (423 aa).

An N-terminal signal peptide occupies residues 1 to 18; that stretch reads MKLCALFAGAVISTSAVA. 2 N-linked (GlcNAc...) asparagine glycosylation sites follow: Asn-84 and Asn-132.

It belongs to the Diels-Alderase family.

The protein operates within secondary metabolite biosynthesis. Functionally, diels-Alderase; part of the gene cluster that mediates the biosynthesis of chaetoglobosin A which has a unique inhibitory activity against actin polymerization in mammalian cells. Chaetoglobosin A and its intermediates are involved in the morphological differentiation of C.globosum. The first step of the pathway is the synthesis of prochaetoglobosin I via condensation of one acetyl-CoA, 8 malonyl-CoA, and a L-tryptophan molecule by the PKS-NRPS hybrid synthetase cheA, followed by reduction of backbone double bond to install desired geometry by the enoyl reductase cheB. Further multiple oxidation steps performed by the cytochrome P450 monooxygenases cheE and cheG, as well as by the FAD-linked oxidoreductase cheF, lead to the formation of chaetoglobosin A. Depending on the order of action of these reductases, distinct intermediates can be identified. Within the pathway, the cytochrome P450 monooxygenase cheE catalyzes a stereospecific epoxidation on prochaetoglobosin I, cytoglobosin D, and chaetoglobosin J intermediates. The FAD-linked oxidoreductase cheF performs dehydrogenation of the C-20 hydroxyl groups in the 20-dihyrochaetoglobosin A and cytoglobosin D intermediates. Finally, the cytochrome P450 monooxygenase cheG can catalyze the stereospecific dihydroxylation of prochaetoglobosin I and prochaetoglobosin IV at C-19 and C-20, respectively. The Diels-Alderase cheD may play a role in the post-PKS-NRPS biosynthetic steps catalyzing Diels-Alder cyclization. This Chaetomium globosum (strain ATCC 6205 / CBS 148.51 / DSM 1962 / NBRC 6347 / NRRL 1970) (Soil fungus) protein is Diels-Alderase cheD.